The primary structure comprises 122 residues: UPF0102 protein Smed_3545 (122 aa).

It belongs to the UPF0102 family.

This is UPF0102 protein Smed_3545 from Sinorhizobium medicae (strain WSM419) (Ensifer medicae).